The primary structure comprises 396 residues: Phosphoglycerate kinase (396 aa).

Substrate contacts are provided by residues 21-23 (DFN), arginine 36, 59-62 (HLGR), arginine 118, and arginine 151. ATP contacts are provided by residues lysine 201, glycine 292, glutamate 323, and 349 to 352 (GGDS).

It belongs to the phosphoglycerate kinase family. In terms of assembly, monomer.

Its subcellular location is the cytoplasm. The enzyme catalyses (2R)-3-phosphoglycerate + ATP = (2R)-3-phospho-glyceroyl phosphate + ADP. Its pathway is carbohydrate degradation; glycolysis; pyruvate from D-glyceraldehyde 3-phosphate: step 2/5. The protein is Phosphoglycerate kinase of Leptospira biflexa serovar Patoc (strain Patoc 1 / Ames).